The sequence spans 298 residues: Elongation factor Ts (298 aa).

The segment at T79–V82 is involved in Mg(2+) ion dislocation from EF-Tu.

Belongs to the EF-Ts family.

The protein resides in the cytoplasm. Functionally, associates with the EF-Tu.GDP complex and induces the exchange of GDP to GTP. It remains bound to the aminoacyl-tRNA.EF-Tu.GTP complex up to the GTP hydrolysis stage on the ribosome. The sequence is that of Elongation factor Ts (tsf) from Mycoplasma genitalium (strain ATCC 33530 / DSM 19775 / NCTC 10195 / G37) (Mycoplasmoides genitalium).